A 142-amino-acid polypeptide reads, in one-letter code: Large ribosomal subunit protein uL13 (142 aa).

The protein belongs to the universal ribosomal protein uL13 family. Part of the 50S ribosomal subunit.

In terms of biological role, this protein is one of the early assembly proteins of the 50S ribosomal subunit, although it is not seen to bind rRNA by itself. It is important during the early stages of 50S assembly. This Citrifermentans bemidjiense (strain ATCC BAA-1014 / DSM 16622 / JCM 12645 / Bem) (Geobacter bemidjiensis) protein is Large ribosomal subunit protein uL13.